Consider the following 230-residue polypeptide: Uracil-DNA glycosylase (230 aa).

Catalysis depends on Asp65, which acts as the Proton acceptor.

It belongs to the uracil-DNA glycosylase (UDG) superfamily. UNG family.

The protein localises to the cytoplasm. It carries out the reaction Hydrolyzes single-stranded DNA or mismatched double-stranded DNA and polynucleotides, releasing free uracil.. Excises uracil residues from the DNA which can arise as a result of misincorporation of dUMP residues by DNA polymerase or due to deamination of cytosine. The chain is Uracil-DNA glycosylase from Lactiplantibacillus plantarum (strain ATCC BAA-793 / NCIMB 8826 / WCFS1) (Lactobacillus plantarum).